We begin with the raw amino-acid sequence, 934 residues long: Bifunctional uridylyltransferase/uridylyl-removing enzyme (934 aa).

Positions 1–379 (MSAHDLKLEE…TFSRRKRKLS (379 aa)) are uridylyltransferase. A uridylyl-removing region spans residues 380–736 (ADGDFVSENH…AKPHTFEAVT (357 aa)). The HD domain maps to 496–613 (VDEHLLRCIA…IDFADTVQTM (118 aa)). 2 consecutive ACT domains span residues 737–819 (EITV…VLAK) and 848–931 (VIEV…RSSQ).

This sequence belongs to the GlnD family. Requires Mg(2+) as cofactor.

The enzyme catalyses [protein-PII]-L-tyrosine + UTP = [protein-PII]-uridylyl-L-tyrosine + diphosphate. It catalyses the reaction [protein-PII]-uridylyl-L-tyrosine + H2O = [protein-PII]-L-tyrosine + UMP + H(+). With respect to regulation, uridylyltransferase (UTase) activity is inhibited by glutamine, while glutamine activates uridylyl-removing (UR) activity. Its function is as follows. Modifies, by uridylylation and deuridylylation, the PII regulatory proteins (GlnB and homologs), in response to the nitrogen status of the cell that GlnD senses through the glutamine level. Under low glutamine levels, catalyzes the conversion of the PII proteins and UTP to PII-UMP and PPi, while under higher glutamine levels, GlnD hydrolyzes PII-UMP to PII and UMP (deuridylylation). Thus, controls uridylylation state and activity of the PII proteins, and plays an important role in the regulation of nitrogen assimilation and metabolism. This Brucella anthropi (strain ATCC 49188 / DSM 6882 / CCUG 24695 / JCM 21032 / LMG 3331 / NBRC 15819 / NCTC 12168 / Alc 37) (Ochrobactrum anthropi) protein is Bifunctional uridylyltransferase/uridylyl-removing enzyme.